Here is a 227-residue protein sequence, read N- to C-terminus: Ribosomal RNA large subunit methyltransferase E (227 aa).

Residues glycine 78, tryptophan 80, aspartate 103, aspartate 119, and aspartate 143 each contribute to the S-adenosyl-L-methionine site. The Proton acceptor role is filled by lysine 183.

This sequence belongs to the class I-like SAM-binding methyltransferase superfamily. RNA methyltransferase RlmE family.

It localises to the cytoplasm. The enzyme catalyses uridine(2552) in 23S rRNA + S-adenosyl-L-methionine = 2'-O-methyluridine(2552) in 23S rRNA + S-adenosyl-L-homocysteine + H(+). In terms of biological role, specifically methylates the uridine in position 2552 of 23S rRNA at the 2'-O position of the ribose in the fully assembled 50S ribosomal subunit. The polypeptide is Ribosomal RNA large subunit methyltransferase E (Rickettsia bellii (strain RML369-C)).